Here is a 600-residue protein sequence, read N- to C-terminus: uncharacterized protein (600 aa).

2 4Fe-4S ferredoxin-type domains span residues 14-44 (RLAIIDYDRCQPKKCSMECMKYCPGVRMGEK) and 53-82 (GKPVISEVLCSGCGICVKRCPFKAISIIGL). 2 consecutive ABC transporter domains span residues 77–318 (ISII…YLYG) and 348–563 (LLSY…LKEM). Residues 117–124 (GQNGIGKS) and 380–387 (GPNGIGKT) each bind ATP. Residues 569-594 (RDPETGRPRANKEGSQRDIMQKEKGE) show a composition bias toward basic and acidic residues. Residues 569-600 (RDPETGRPRANKEGSQRDIMQKEKGEYYYVDE) form a disordered region.

The protein belongs to the ABC transporter superfamily.

This is an uncharacterized protein from Methanocaldococcus jannaschii (strain ATCC 43067 / DSM 2661 / JAL-1 / JCM 10045 / NBRC 100440) (Methanococcus jannaschii).